Reading from the N-terminus, the 242-residue chain is Ribonuclease PH (242 aa).

Residues Arg-89 and 127 to 129 (GTR) contribute to the phosphate site.

The protein belongs to the RNase PH family. In terms of assembly, homohexameric ring arranged as a trimer of dimers.

It catalyses the reaction tRNA(n+1) + phosphate = tRNA(n) + a ribonucleoside 5'-diphosphate. Its function is as follows. Phosphorolytic 3'-5' exoribonuclease that plays an important role in tRNA 3'-end maturation. Removes nucleotide residues following the 3'-CCA terminus of tRNAs; can also add nucleotides to the ends of RNA molecules by using nucleoside diphosphates as substrates, but this may not be physiologically important. Probably plays a role in initiation of 16S rRNA degradation (leading to ribosome degradation) during starvation. In Neisseria meningitidis serogroup A / serotype 4A (strain DSM 15465 / Z2491), this protein is Ribonuclease PH.